The primary structure comprises 274 residues: Large ribosomal subunit protein uL2 (274 aa).

2 disordered regions span residues 21–59 (KVGL…GGHK) and 224–274 (AMNP…QLKG). Positions 32-42 (SLTSGKKSSGG) are enriched in low complexity. The segment covering 45 to 59 (NHGRITTRHRGGGHK) has biased composition (basic residues). The span at 263–274 (KSSDKYIKQLKG) shows a compositional bias: basic and acidic residues.

This sequence belongs to the universal ribosomal protein uL2 family. Part of the 50S ribosomal subunit. Forms a bridge to the 30S subunit in the 70S ribosome.

In terms of biological role, one of the primary rRNA binding proteins. Required for association of the 30S and 50S subunits to form the 70S ribosome, for tRNA binding and peptide bond formation. It has been suggested to have peptidyltransferase activity; this is somewhat controversial. Makes several contacts with the 16S rRNA in the 70S ribosome. The chain is Large ribosomal subunit protein uL2 from Wolbachia pipientis wMel.